Consider the following 246-residue polypeptide: Virulence plasmid protein pGP6-D (246 aa).

It belongs to the UPF0137 (pGP6-D) family.

The chain is Virulence plasmid protein pGP6-D from Chlamydia muridarum (strain MoPn / Nigg).